A 333-amino-acid chain; its full sequence is Holliday junction branch migration complex subunit RuvB (333 aa).

The tract at residues 1-181 is large ATPase domain (RuvB-L); it reads MNDILNKEPM…FGISSHMEYY (181 aa). ATP contacts are provided by residues L20, R21, G62, K65, T66, T67, 128 to 130, R171, Y181, and R218; that span reads EDF. T66 serves as a coordination point for Mg(2+). The tract at residues 182–252 is small ATPAse domain (RuvB-S); sequence QERDLEEIVK…ITDKALSILD (71 aa). The tract at residues 255–333 is head domain (RuvB-H); the sequence is AAGLDYIDQK…HLGYVYNEED (79 aa). Residues R291, R310, and R315 each contribute to the DNA site.

Belongs to the RuvB family. In terms of assembly, homohexamer. Forms an RuvA(8)-RuvB(12)-Holliday junction (HJ) complex. HJ DNA is sandwiched between 2 RuvA tetramers; dsDNA enters through RuvA and exits via RuvB. An RuvB hexamer assembles on each DNA strand where it exits the tetramer. Each RuvB hexamer is contacted by two RuvA subunits (via domain III) on 2 adjacent RuvB subunits; this complex drives branch migration. In the full resolvosome a probable DNA-RuvA(4)-RuvB(12)-RuvC(2) complex forms which resolves the HJ.

The protein resides in the cytoplasm. The enzyme catalyses ATP + H2O = ADP + phosphate + H(+). The RuvA-RuvB-RuvC complex processes Holliday junction (HJ) DNA during genetic recombination and DNA repair, while the RuvA-RuvB complex plays an important role in the rescue of blocked DNA replication forks via replication fork reversal (RFR). RuvA specifically binds to HJ cruciform DNA, conferring on it an open structure. The RuvB hexamer acts as an ATP-dependent pump, pulling dsDNA into and through the RuvAB complex. RuvB forms 2 homohexamers on either side of HJ DNA bound by 1 or 2 RuvA tetramers; 4 subunits per hexamer contact DNA at a time. Coordinated motions by a converter formed by DNA-disengaged RuvB subunits stimulates ATP hydrolysis and nucleotide exchange. Immobilization of the converter enables RuvB to convert the ATP-contained energy into a lever motion, pulling 2 nucleotides of DNA out of the RuvA tetramer per ATP hydrolyzed, thus driving DNA branch migration. The RuvB motors rotate together with the DNA substrate, which together with the progressing nucleotide cycle form the mechanistic basis for DNA recombination by continuous HJ branch migration. Branch migration allows RuvC to scan DNA until it finds its consensus sequence, where it cleaves and resolves cruciform DNA. The polypeptide is Holliday junction branch migration complex subunit RuvB (Lactococcus lactis subsp. lactis (strain IL1403) (Streptococcus lactis)).